A 179-amino-acid chain; its full sequence is Inner membrane-spanning protein YciB (179 aa).

5 helical membrane passes run 22–42 (IYAATTALIVATAIVLIYSWV), 50–70 (MALITFVLVAVFGGLTLFFHN), 76–96 (WKVTVIYALFAGALLFSQWVM), 121–141 (LAWAVFFILCGLANIYIAFWL), and 149–169 (FKVFGLTALTLVFTLLSGIYI).

Belongs to the YciB family.

Its subcellular location is the cell inner membrane. Plays a role in cell envelope biogenesis, maintenance of cell envelope integrity and membrane homeostasis. In Klebsiella pneumoniae (strain 342), this protein is Inner membrane-spanning protein YciB.